A 320-amino-acid chain; its full sequence is Phospho-N-acetylmuramoyl-pentapeptide-transferase (320 aa).

Helical transmembrane passes span 5–25 (FWAF…VIKF), 51–71 (MGGA…SVAY), 75–95 (IGFV…IIGG), 121–141 (LCAV…ILNI), 143–163 (FIGV…WLVG), 176–196 (GLLT…ALGV), 198–218 (NHII…FLLF), 241–261 (IESI…IFVI), and 300–320 (IDAL…LYMS).

The protein belongs to the glycosyltransferase 4 family. MraY subfamily. The cofactor is Mg(2+).

It localises to the cell membrane. It catalyses the reaction UDP-N-acetyl-alpha-D-muramoyl-L-alanyl-gamma-D-glutamyl-L-lysyl-D-alanyl-D-alanine + di-trans,octa-cis-undecaprenyl phosphate = Mur2Ac(oyl-L-Ala-gamma-D-Glu-L-Lys-D-Ala-D-Ala)-di-trans,octa-cis-undecaprenyl diphosphate + UMP. It participates in cell wall biogenesis; peptidoglycan biosynthesis. Its function is as follows. Catalyzes the initial step of the lipid cycle reactions in the biosynthesis of the cell wall peptidoglycan: transfers peptidoglycan precursor phospho-MurNAc-pentapeptide from UDP-MurNAc-pentapeptide onto the lipid carrier undecaprenyl phosphate, yielding undecaprenyl-pyrophosphoryl-MurNAc-pentapeptide, known as lipid I. This Leuconostoc mesenteroides subsp. mesenteroides (strain ATCC 8293 / DSM 20343 / BCRC 11652 / CCM 1803 / JCM 6124 / NCDO 523 / NBRC 100496 / NCIMB 8023 / NCTC 12954 / NRRL B-1118 / 37Y) protein is Phospho-N-acetylmuramoyl-pentapeptide-transferase.